A 1072-amino-acid polypeptide reads, in one-letter code: Integrin alpha-6 (1072 aa).

The signal sequence occupies residues 1-18 (MAAALLLYLPLLPGLAGA). Over 19-1010 (FNLDAENVIG…FPAKPVALYT (992 aa)) the chain is Extracellular. FG-GAP repeat units lie at residues 23-88 (AENV…DTRC), 94-160 (DEDT…IKDD), 170-223 (DGRL…FYDL), 238-295 (RQDK…QRAL), 296-357 (SLEH…KWEG), 358-413 (IKPI…GINT), and 414-476 (EPAQ…VQPD). N71 is a glycosylation site (N-linked (GlcNAc...) asparagine). Disulfide bonds link C79–C88, C125–C148, and C169–C182. N-linked (GlcNAc...) asparagine glycosylation is found at N217 and N278. Ca(2+)-binding residues include D318, N320, D322, and D326. An N-linked (GlcNAc...) asparagine glycan is attached at N364. Residues D380, N382, D384, Y386, D388, D438, D440, N442, Y444, and D446 each contribute to the Ca(2+) site. C498 and C557 are joined by a disulfide. N515 and N609 each carry an N-linked (GlcNAc...) asparagine glycan. 2 disulfide bridges follow: C625–C631 and C725–C736. N-linked (GlcNAc...) asparagine glycans are attached at residues N730, N747, and N780. Intrachain disulfides connect C880–C927 and C933–C938. A glycan (N-linked (GlcNAc...) asparagine) is linked at N957. A helical transmembrane segment spans residues 1011–1036 (GVPWWIIAVAIFAGVLMLALLVFLLW). Residues 1037-1072 (KCGFFKRSKKDHYDATYHKAEIHAQPSDKERLTSDA) are Cytoplasmic-facing. The S-palmitoyl cysteine; by DHHC3 moiety is linked to residue C1038. The GFFKR motif motif lies at 1039–1043 (GFFKR). A Phosphoserine; by CaMK2 modification is found at S1070.

This sequence belongs to the integrin alpha chain family. Heterodimer of an alpha and a beta subunit. The alpha subunit is composed of a heavy and a light chain linked by a disulfide bond. Alpha-6 associates with either beta-1 (ITGB1) or beta-4 (ITGB4) to form ITGA6:ITGB1 and ITGA6:ITGB4, respectively. Phosphorylated in vivo.

Its subcellular location is the cell membrane. Functionally, integrin alpha-6/beta-1 (ITGA6:ITGB1) is a receptor for laminin on platelets. Integrin alpha-6/beta-1 (ITGA6:ITGB1) is present in oocytes and is involved in sperm-egg fusion. Integrin alpha-6/beta-4 (ITGA6:ITGB4) is a receptor for laminin in epithelial cells and it plays a critical structural role in the hemidesmosome. In Gallus gallus (Chicken), this protein is Integrin alpha-6 (ITGA6).